The primary structure comprises 101 residues: Small ribosomal subunit protein uS14 (101 aa).

Belongs to the universal ribosomal protein uS14 family. In terms of assembly, part of the 30S ribosomal subunit. Contacts proteins S3 and S10.

Its function is as follows. Binds 16S rRNA, required for the assembly of 30S particles and may also be responsible for determining the conformation of the 16S rRNA at the A site. The chain is Small ribosomal subunit protein uS14 from Polynucleobacter asymbioticus (strain DSM 18221 / CIP 109841 / QLW-P1DMWA-1) (Polynucleobacter necessarius subsp. asymbioticus).